Consider the following 279-residue polypeptide: Syntaxin-21 (279 aa).

The tract at residues 1 to 34 is disordered; that stretch reads MSFQDLEAGTRSPAPNRFTGGRQQRPSSRGDPSQ. At Ser-2 the chain carries N-acetylserine. At 2 to 258 the chain is on the cytoplasmic side; the sequence is SFQDLEAGTR…AKTQRSNSSL (257 aa). The segment covering 21-31 has biased composition (polar residues); that stretch reads GRQQRPSSRGD. Residues 65–94 adopt a coiled-coil conformation; sequence ELRDKLQKTRLQISELVKNTSAKLKEASEA. Residues 186–248 enclose the t-SNARE coiled-coil homology domain; it reads EAIIEEREQG…TQATVQLRKA (63 aa). A helical; Anchor for type IV membrane protein transmembrane segment spans residues 259 to 279; sequence TCLLILIFGIVLLIVIIVVLV.

This sequence belongs to the syntaxin family. As to quaternary structure, interacts with VTI11 and SYP51 to form a t-SNARE complex and with alpha-SNAP to form a 20S complex. In terms of tissue distribution, a high level expression is seen in the roots while a low level expression is seen in the leaves.

The protein resides in the prevacuolar compartment membrane. May function in the docking or fusion of transport vesicles with the prevacuolar membrane. This chain is Syntaxin-21 (SYP21), found in Arabidopsis thaliana (Mouse-ear cress).